The primary structure comprises 278 residues: Large ribosomal subunit protein uL2c (278 aa).

A disordered region spans residues 222–241 (GVVMNPNDHPHGGGEGRSPI).

Belongs to the universal ribosomal protein uL2 family. Part of the 50S ribosomal subunit.

Its subcellular location is the plastid. It localises to the chloroplast. In Tupiella akineta (Green alga), this protein is Large ribosomal subunit protein uL2c (rpl2).